A 251-amino-acid chain; its full sequence is MPRYKLTVEYDGTPYVGWQRQENGHAVQNAIELAFKKFCGEDLTLSAAGRTDAGVHATAQVVHVDLTKDWGAGKVRDAVNAHLVMADERVSILNVERTTDTFDARFSARARHYLYRIHNRRAPLAVDYQRAWWVQKRLDAEAMHEAAKRLLGEHDFTTFRATQCQAKSPVKTLDRLDVIRNGDYVEMRVSARSFLHNQVRSFAGSLMEVGVGRWTADDLQAALEAKDRKACGQVAPPYGLYLIGVDYAFPY.

Catalysis depends on aspartate 52, which acts as the Nucleophile. Tyrosine 113 is a binding site for substrate.

It belongs to the tRNA pseudouridine synthase TruA family. Homodimer.

It catalyses the reaction uridine(38/39/40) in tRNA = pseudouridine(38/39/40) in tRNA. In terms of biological role, formation of pseudouridine at positions 38, 39 and 40 in the anticodon stem and loop of transfer RNAs. In Brucella anthropi (strain ATCC 49188 / DSM 6882 / CCUG 24695 / JCM 21032 / LMG 3331 / NBRC 15819 / NCTC 12168 / Alc 37) (Ochrobactrum anthropi), this protein is tRNA pseudouridine synthase A.